Here is a 228-residue protein sequence, read N- to C-terminus: HTH-type transcriptional regulator ArcR (228 aa).

22–141 (SYINIPVGVL…VKLFSLLSET (120 aa)) is an a nucleoside 3',5'-cyclic phosphate binding site. The region spanning 155 to 228 (KLAKERVTKI…SKNWLVSKDL (74 aa)) is the HTH crp-type domain. Positions 188-207 (IQLLSDMAGISRETTSHIIN) form a DNA-binding region, H-T-H motif.

It localises to the cytoplasm. Its function is as follows. Positively regulates the expression of the arcABDCR operon under anaerobic conditions, thus playing an essential role in arginine catabolism. May also control the expression of genes encoding proteins which are involved in anaerobic metabolism. Can bind cyclic AMP. The chain is HTH-type transcriptional regulator ArcR (arcR) from Staphylococcus epidermidis (strain ATCC 12228 / FDA PCI 1200).